The chain runs to 300 residues: tRNA dimethylallyltransferase 2 (300 aa).

Position 13–20 (13–20 (GPTGVGKT)) interacts with ATP. Residue 15–20 (TGVGKT) coordinates substrate. The tract at residues 38–41 (DSRQ) is interaction with substrate tRNA.

It belongs to the IPP transferase family. Monomer. Mg(2+) is required as a cofactor.

The enzyme catalyses adenosine(37) in tRNA + dimethylallyl diphosphate = N(6)-dimethylallyladenosine(37) in tRNA + diphosphate. Its function is as follows. Catalyzes the transfer of a dimethylallyl group onto the adenine at position 37 in tRNAs that read codons beginning with uridine, leading to the formation of N6-(dimethylallyl)adenosine (i(6)A). The chain is tRNA dimethylallyltransferase 2 from Porphyromonas gingivalis (strain ATCC 33277 / DSM 20709 / CIP 103683 / JCM 12257 / NCTC 11834 / 2561).